Here is a 331-residue protein sequence, read N- to C-terminus: MKQIVYVASPESQQIHVWQLSDAGALELLQTVEAPGQVQPMAIHPDRTHLYVGVRPAFGIVSYRIEADGTLQQAGMAPLPGSPTHISTDLQGRYLFSASYSGNCASVSPIGHDGVVVAPIQQIDGLTAPHSANIDPTNQLLLVPCLKEDRIRLFNLDLQGELTPHTQEAVTTASGAGPRHMAFHHNDKYAYCVNELDGTVDVFAISENGGKYTLVQTLDIMPADFNGTRWAADIHITPNGRFLYTSDRTASILTIFSVSEDGSTLSVVGYHPTEEQPRGFNIDHSGRFVISSGQKSGHIGVYEIDQASGKLTTLARYPVGKGPMWVSILAK.

Belongs to the cycloisomerase 2 family.

It carries out the reaction 6-phospho-D-glucono-1,5-lactone + H2O = 6-phospho-D-gluconate + H(+). The protein operates within carbohydrate degradation; pentose phosphate pathway; D-ribulose 5-phosphate from D-glucose 6-phosphate (oxidative stage): step 2/3. In terms of biological role, catalyzes the hydrolysis of 6-phosphogluconolactone to 6-phosphogluconate. This Serratia proteamaculans (strain 568) protein is 6-phosphogluconolactonase.